Reading from the N-terminus, the 393-residue chain is uncharacterized protein (393 aa).

The segment at 164–183 is disordered; it reads ASDPHPGKNSPASPTGENKE. Positions 173-183 are enriched in polar residues; sequence SPASPTGENKE.

This is an uncharacterized protein from Treponema pallidum (strain Nichols).